We begin with the raw amino-acid sequence, 93 residues long: UPF0358 protein YlaN (93 aa).

This sequence belongs to the UPF0358 family.

Essential for cell growth and for normal cell shape. The protein is UPF0358 protein YlaN (ylaN) of Bacillus subtilis (strain 168).